The primary structure comprises 383 residues: Podocin (383 aa).

Basic and acidic residues predominate over residues 1–41 (MERRARSSSRESRGRGGRTPHKENKRAKAERSGGGRGRQEA). Residues 1–76 (MERRARSSSR…VDEVRGSGEE (76 aa)) form a disordered region. Topologically, residues 1–102 (MERRARSSSR…TKSSGLGACE (102 aa)) are cytoplasmic. A lipid anchor (S-palmitoyl cysteine) is attached at Cys-101. An intramembrane segment occupies 103–123 (WLLVLISLLFIIMTFPFSIWF). Residues 124 to 383 (CVKVVQEYER…NPKKKDSPML (260 aa)) lie on the Cytoplasmic side of the membrane. A glycan (N-linked (GlcNAc...) asparagine) is linked at Gln-287. The segment at 355–383 (NRTQGSLPFPSPSKPVEPLNPKKKDSPML) is disordered. A compositionally biased stretch (basic and acidic residues) spans 374 to 383 (NPKKKDSPML).

This sequence belongs to the band 7/mec-2 family. In terms of assembly, interacts with nephrin/NPHS1 and KIRREL1. Interacts directly with CD2AP. Interacts with DDN. Post-translationally, glycosylated. In terms of tissue distribution, almost exclusively expressed in the podocytes of fetal and mature kidney glomeruli.

It localises to the cell membrane. The protein localises to the endoplasmic reticulum. Its function is as follows. Plays a role in the regulation of glomerular permeability, acting probably as a linker between the plasma membrane and the cytoskeleton. In Homo sapiens (Human), this protein is Podocin (NPHS2).